The following is a 190-amino-acid chain: Peptidyl-tRNA hydrolase (190 aa).

TRNA is bound at residue tyrosine 14. The Proton acceptor role is filled by histidine 19. 3 residues coordinate tRNA: tyrosine 64, asparagine 66, and asparagine 112.

Belongs to the PTH family. Monomer.

The protein localises to the cytoplasm. The catalysed reaction is an N-acyl-L-alpha-aminoacyl-tRNA + H2O = an N-acyl-L-amino acid + a tRNA + H(+). Hydrolyzes ribosome-free peptidyl-tRNAs (with 1 or more amino acids incorporated), which drop off the ribosome during protein synthesis, or as a result of ribosome stalling. Its function is as follows. Catalyzes the release of premature peptidyl moieties from peptidyl-tRNA molecules trapped in stalled 50S ribosomal subunits, and thus maintains levels of free tRNAs and 50S ribosomes. The protein is Peptidyl-tRNA hydrolase of Pelodictyon phaeoclathratiforme (strain DSM 5477 / BU-1).